The sequence spans 398 residues: Bone morphogenetic protein 2-A (398 aa).

The N-terminal stretch at 1 to 23 is a signal peptide; it reads MVAGIHSLLLLLFYQVLLSGCTG. Residues 24 to 284 constitute a propeptide that is removed on maturation; it reads LIPEEGKRKY…GHALHKRQKR (261 aa). Asn-137, Asn-202, and Asn-340 each carry an N-linked (GlcNAc...) asparagine glycan. 3 disulfide bridges follow: Cys-298/Cys-363, Cys-327/Cys-395, and Cys-331/Cys-397.

This sequence belongs to the TGF-beta family. Homodimer; disulfide-linked.

Its subcellular location is the secreted. In terms of biological role, induces cartilage and bone formation. The sequence is that of Bone morphogenetic protein 2-A (bmp2-a) from Xenopus laevis (African clawed frog).